A 211-amino-acid polypeptide reads, in one-letter code: ATP phosphoribosyltransferase (211 aa).

It belongs to the ATP phosphoribosyltransferase family. Short subfamily. In terms of assembly, heteromultimer composed of HisG and HisZ subunits.

It localises to the cytoplasm. It carries out the reaction 1-(5-phospho-beta-D-ribosyl)-ATP + diphosphate = 5-phospho-alpha-D-ribose 1-diphosphate + ATP. It functions in the pathway amino-acid biosynthesis; L-histidine biosynthesis; L-histidine from 5-phospho-alpha-D-ribose 1-diphosphate: step 1/9. Catalyzes the condensation of ATP and 5-phosphoribose 1-diphosphate to form N'-(5'-phosphoribosyl)-ATP (PR-ATP). Has a crucial role in the pathway because the rate of histidine biosynthesis seems to be controlled primarily by regulation of HisG enzymatic activity. This Ectopseudomonas mendocina (strain ymp) (Pseudomonas mendocina) protein is ATP phosphoribosyltransferase.